The primary structure comprises 223 residues: Deoxyribose-phosphate aldolase 2 (223 aa).

D89 (proton donor/acceptor) is an active-site residue. K152 functions as the Schiff-base intermediate with acetaldehyde in the catalytic mechanism. The Proton donor/acceptor role is filled by K181.

The protein belongs to the DeoC/FbaB aldolase family. DeoC type 1 subfamily.

It is found in the cytoplasm. It catalyses the reaction 2-deoxy-D-ribose 5-phosphate = D-glyceraldehyde 3-phosphate + acetaldehyde. Its pathway is carbohydrate degradation; 2-deoxy-D-ribose 1-phosphate degradation; D-glyceraldehyde 3-phosphate and acetaldehyde from 2-deoxy-alpha-D-ribose 1-phosphate: step 2/2. In terms of biological role, catalyzes a reversible aldol reaction between acetaldehyde and D-glyceraldehyde 3-phosphate to generate 2-deoxy-D-ribose 5-phosphate. In Bacillus licheniformis (strain ATCC 14580 / DSM 13 / JCM 2505 / CCUG 7422 / NBRC 12200 / NCIMB 9375 / NCTC 10341 / NRRL NRS-1264 / Gibson 46), this protein is Deoxyribose-phosphate aldolase 2.